We begin with the raw amino-acid sequence, 152 residues long: Adenosine 5'-monophosphoramidase HNT1 (152 aa).

In terms of domain architecture, HIT spans 8-119 (IFCKIIKGEI…IPKKDEATGL (112 aa)). AMP-binding positions include 33-34 (DI), N93, 99-101 (HQV), and 106-108 (HFH). The Histidine triad motif motif lies at 104-108 (HVHFH). H106 acts as the Tele-AMP-histidine intermediate in catalysis.

The protein belongs to the HINT family. Homodimer. It depends on Mg(2+) as a cofactor.

The catalysed reaction is adenosine 5'-phosphoramidate + H2O = AMP + NH4(+). Hydrolyzes adenosine 5'-monophosphoramidate substrates such as AMP-morpholidate, AMP-N-alanine methyl ester, AMP-alpha-acetyl lysine methyl ester and AMP-NH2. In Candida albicans (strain SC5314 / ATCC MYA-2876) (Yeast), this protein is Adenosine 5'-monophosphoramidase HNT1.